The following is a 473-amino-acid chain: Photosystem II CP43 reaction center protein (473 aa).

Positions 1–14 are excised as a propeptide; that stretch reads MKTLYSLRRFYPVE. Thr15 bears the N-acetylthreonine mark. The residue at position 15 (Thr15) is a Phosphothreonine. Helical transmembrane passes span 69–93, 134–155, 178–200, 255–275, and 291–312; these read LFEV…PHLA, LLGP…KDRN, KALY…RKIT, KPFA…LSYS, and WFNN…ASQA. [CaMn4O5] cluster is bound at residue Glu367. The helical transmembrane segment at 447-471 threads the bilayer; the sequence is RARAAAAGFEKGIDRDFEPVLSMTP.

This sequence belongs to the PsbB/PsbC family. PsbC subfamily. In terms of assembly, PSII is composed of 1 copy each of membrane proteins PsbA, PsbB, PsbC, PsbD, PsbE, PsbF, PsbH, PsbI, PsbJ, PsbK, PsbL, PsbM, PsbT, PsbX, PsbY, PsbZ, Psb30/Ycf12, at least 3 peripheral proteins of the oxygen-evolving complex and a large number of cofactors. It forms dimeric complexes. Requires Binds multiple chlorophylls and provides some of the ligands for the Ca-4Mn-5O cluster of the oxygen-evolving complex. It may also provide a ligand for a Cl- that is required for oxygen evolution. PSII binds additional chlorophylls, carotenoids and specific lipids. as cofactor.

The protein resides in the plastid. It is found in the chloroplast thylakoid membrane. Functionally, one of the components of the core complex of photosystem II (PSII). It binds chlorophyll and helps catalyze the primary light-induced photochemical processes of PSII. PSII is a light-driven water:plastoquinone oxidoreductase, using light energy to abstract electrons from H(2)O, generating O(2) and a proton gradient subsequently used for ATP formation. This is Photosystem II CP43 reaction center protein from Helianthus annuus (Common sunflower).